A 1389-amino-acid chain; its full sequence is uncharacterized protein (1389 aa).

A coiled-coil region spans residues 43–94 (STIAQRVSQLENEVAEINVALAEHVNELNSQEKRIDKLEKTVKKKKSNCSDD). The interval 294-353 (HKNRRSKSDNSDLSEYSSSNSDDSECTDSDGSSCSTDGSPDCTESENTESHRSHGKKKHR) is disordered. 2 stretches are compositionally biased toward low complexity: residues 304–314 (SDLSEYSSSNS) and 322–335 (SDGS…SPDC). WD repeat units lie at residues 867 to 907 (TFTD…VKHI), 1017 to 1056 (GYNE…TPSG), and 1115 to 1156 (GISN…ILST).

It localises to the virion. This is an uncharacterized protein from Acanthamoeba polyphaga (Amoeba).